The chain runs to 337 residues: Pyridoxal 5'-phosphate synthase subunit PdxS (337 aa).

D65 serves as a coordination point for D-ribose 5-phosphate. K122 functions as the Schiff-base intermediate with D-ribose 5-phosphate in the catalytic mechanism. G194 serves as a coordination point for D-ribose 5-phosphate. A D-glyceraldehyde 3-phosphate-binding site is contributed by K206. Residues G255 and 276-277 each bind D-ribose 5-phosphate; that span reads GS.

It belongs to the PdxS/SNZ family. In the presence of PdxT, forms a dodecamer of heterodimers.

The catalysed reaction is aldehydo-D-ribose 5-phosphate + D-glyceraldehyde 3-phosphate + L-glutamine = pyridoxal 5'-phosphate + L-glutamate + phosphate + 3 H2O + H(+). It functions in the pathway cofactor biosynthesis; pyridoxal 5'-phosphate biosynthesis. Functionally, catalyzes the formation of pyridoxal 5'-phosphate from ribose 5-phosphate (RBP), glyceraldehyde 3-phosphate (G3P) and ammonia. The ammonia is provided by the PdxT subunit. Can also use ribulose 5-phosphate and dihydroxyacetone phosphate as substrates, resulting from enzyme-catalyzed isomerization of RBP and G3P, respectively. The polypeptide is Pyridoxal 5'-phosphate synthase subunit PdxS (Pyrobaculum arsenaticum (strain DSM 13514 / JCM 11321 / PZ6)).